The sequence spans 564 residues: MPKVEIYKSILLEKIGKILTKSELVSVLEMAKAEICEFDTVNDKIKIEFNDTNRPDLWSCAGLARQIKTYLFGHLPLFKFFSMADNLQEFYGEILVSPEVFSIRPFIFGFLAKGVICNERMLETLIQLQEKLCHNYGQKRKRVAMGMYSSDLIEFPLSYTACNSDYRFIPLGMDREMSIEEINRVHSKGIEYSTILASFNKYPLLLDDKDKVLSYPPVINSHDIGALKVGDTDLFIEVTGTNLEATLLSLSVTACDLHDMGFEILPVKTIFPNETLFGKEIICPYYFQNMLEVNVDNVNKMLGSNFTANNMCLDLKKLGISAYFKELDKFYVIPPVYRNDFLHEVDVIEEIMIGMGLDSFKPELPKDFTLGRLSQIEEFSRKIKNLMIGMGFQEMIYNYLGSRTDFIEKMNIEGDDFLSVANPMTEGYEYIRGSIVSDLLKSESISSNFPYPHKIFEIGKVALKDLNSVDGTITYDNLAFLMADKEFSFNEINSLVSSLFYYLNIEFKLRESSKSLYIDGRGVDILINDTVLGGFGEVSPYILRNFGIMVPCCVLEINLNKLLN.

Positions 286–362 (YFQNMLEVNV…IGMGLDSFKP (77 aa)) constitute a B5 domain. Mg(2+)-binding residues include Asp340, Asp346, Glu349, and Glu350.

This sequence belongs to the phenylalanyl-tRNA synthetase beta subunit family. Type 2 subfamily. Tetramer of two alpha and two beta subunits. The cofactor is Mg(2+).

The protein localises to the cytoplasm. The enzyme catalyses tRNA(Phe) + L-phenylalanine + ATP = L-phenylalanyl-tRNA(Phe) + AMP + diphosphate + H(+). This is Phenylalanine--tRNA ligase beta subunit from Borrelia turicatae (strain 91E135).